The sequence spans 437 residues: Enolase 2 (437 aa).

H160 and E169 together coordinate substrate. The active-site Proton donor is the E212. Residues D247, E296, and D321 each coordinate Mg(2+). Positions 296 and 321 each coordinate substrate. K346 acts as the Proton acceptor in catalysis. Substrate-binding positions include 373–376 and K397; that span reads SHRS.

The protein belongs to the enolase family. As to quaternary structure, homodimer. Mg(2+) serves as cofactor.

It localises to the cytoplasm. It catalyses the reaction (2R)-2-phosphoglycerate = phosphoenolpyruvate + H2O. The protein operates within carbohydrate degradation; glycolysis; pyruvate from D-glyceraldehyde 3-phosphate: step 4/5. This chain is Enolase 2 (ENO2), found in Candida glabrata (strain ATCC 2001 / BCRC 20586 / JCM 3761 / NBRC 0622 / NRRL Y-65 / CBS 138) (Yeast).